We begin with the raw amino-acid sequence, 266 residues long: Undecaprenyl-diphosphatase (266 aa).

The next 7 membrane-spanning stretches (helical) occupy residues 41-61 (YAYS…LIYF), 82-102 (LVYI…LYYV), 106-126 (WLVV…AVVL), 159-179 (AVSV…LLLL), 191-211 (FVLV…SEGG), 213-233 (VATA…IITI), and 246-266 (VLVN…RIIF).

Belongs to the UppP family.

It localises to the cell membrane. The enzyme catalyses di-trans,octa-cis-undecaprenyl diphosphate + H2O = di-trans,octa-cis-undecaprenyl phosphate + phosphate + H(+). Functionally, catalyzes the dephosphorylation of undecaprenyl diphosphate (UPP). The sequence is that of Undecaprenyl-diphosphatase from Pyrobaculum aerophilum (strain ATCC 51768 / DSM 7523 / JCM 9630 / CIP 104966 / NBRC 100827 / IM2).